We begin with the raw amino-acid sequence, 608 residues long: UvrABC system protein C (608 aa).

The GIY-YIG domain occupies 18-96; it reads NQPGVYRMYN…IKKYKPRYNV (79 aa). Residues 206–241 enclose the UVR domain; that stretch reads KQVIDSLVQHMERASTDLRFEAAARYRDQISALNKV.

Belongs to the UvrC family. In terms of assembly, interacts with UvrB in an incision complex.

Its subcellular location is the cytoplasm. Its function is as follows. The UvrABC repair system catalyzes the recognition and processing of DNA lesions. UvrC both incises the 5' and 3' sides of the lesion. The N-terminal half is responsible for the 3' incision and the C-terminal half is responsible for the 5' incision. In Pseudoalteromonas atlantica (strain T6c / ATCC BAA-1087), this protein is UvrABC system protein C.